The following is a 951-amino-acid chain: Valine--tRNA ligase (951 aa).

A 'HIGH' region motif is present at residues 42–52 (PNVTGSLHMGH). The 'KMSKS' region motif lies at 554 to 558 (KMSKS). Lys-557 serves as a coordination point for ATP. A coiled-coil region spans residues 882-944 (LINKDDELAR…AEAKAKLIEQ (63 aa)).

The protein belongs to the class-I aminoacyl-tRNA synthetase family. ValS type 1 subfamily. In terms of assembly, monomer.

It localises to the cytoplasm. It catalyses the reaction tRNA(Val) + L-valine + ATP = L-valyl-tRNA(Val) + AMP + diphosphate. Its function is as follows. Catalyzes the attachment of valine to tRNA(Val). As ValRS can inadvertently accommodate and process structurally similar amino acids such as threonine, to avoid such errors, it has a 'posttransfer' editing activity that hydrolyzes mischarged Thr-tRNA(Val) in a tRNA-dependent manner. In Salmonella choleraesuis (strain SC-B67), this protein is Valine--tRNA ligase.